The primary structure comprises 335 residues: Holliday junction branch migration complex subunit RuvB (335 aa).

A large ATPase domain (RuvB-L) region spans residues 1-181 (MERIVEVEKF…FGMHFRLQFY (181 aa)). Residues Leu20, Arg21, Gly62, Lys65, Thr66, Thr67, 128–130 (EDF), Arg171, Tyr181, and Arg218 each bind ATP. Thr66 provides a ligand contact to Mg(2+). Residues 182–252 (TPQELAQIIT…RTQKALEALG (71 aa)) are small ATPAse domain (RuvB-S). The segment at 255–335 (ERGFDELDLK…LTPNIQNSLF (81 aa)) is head domain (RuvB-H). Positions 309 and 314 each coordinate DNA.

The protein belongs to the RuvB family. In terms of assembly, homohexamer. Forms an RuvA(8)-RuvB(12)-Holliday junction (HJ) complex. HJ DNA is sandwiched between 2 RuvA tetramers; dsDNA enters through RuvA and exits via RuvB. An RuvB hexamer assembles on each DNA strand where it exits the tetramer. Each RuvB hexamer is contacted by two RuvA subunits (via domain III) on 2 adjacent RuvB subunits; this complex drives branch migration. In the full resolvosome a probable DNA-RuvA(4)-RuvB(12)-RuvC(2) complex forms which resolves the HJ.

Its subcellular location is the cytoplasm. It carries out the reaction ATP + H2O = ADP + phosphate + H(+). The RuvA-RuvB-RuvC complex processes Holliday junction (HJ) DNA during genetic recombination and DNA repair, while the RuvA-RuvB complex plays an important role in the rescue of blocked DNA replication forks via replication fork reversal (RFR). RuvA specifically binds to HJ cruciform DNA, conferring on it an open structure. The RuvB hexamer acts as an ATP-dependent pump, pulling dsDNA into and through the RuvAB complex. RuvB forms 2 homohexamers on either side of HJ DNA bound by 1 or 2 RuvA tetramers; 4 subunits per hexamer contact DNA at a time. Coordinated motions by a converter formed by DNA-disengaged RuvB subunits stimulates ATP hydrolysis and nucleotide exchange. Immobilization of the converter enables RuvB to convert the ATP-contained energy into a lever motion, pulling 2 nucleotides of DNA out of the RuvA tetramer per ATP hydrolyzed, thus driving DNA branch migration. The RuvB motors rotate together with the DNA substrate, which together with the progressing nucleotide cycle form the mechanistic basis for DNA recombination by continuous HJ branch migration. Branch migration allows RuvC to scan DNA until it finds its consensus sequence, where it cleaves and resolves cruciform DNA. The chain is Holliday junction branch migration complex subunit RuvB from Nitratiruptor sp. (strain SB155-2).